Consider the following 523-residue polypeptide: Bifunctional purine biosynthesis protein PurH (523 aa).

Positions 1 to 145 (MIKQALLSVS…KNHRDVTVIV (145 aa)) constitute an MGS-like domain.

Belongs to the PurH family.

The catalysed reaction is (6R)-10-formyltetrahydrofolate + 5-amino-1-(5-phospho-beta-D-ribosyl)imidazole-4-carboxamide = 5-formamido-1-(5-phospho-D-ribosyl)imidazole-4-carboxamide + (6S)-5,6,7,8-tetrahydrofolate. It carries out the reaction IMP + H2O = 5-formamido-1-(5-phospho-D-ribosyl)imidazole-4-carboxamide. It participates in purine metabolism; IMP biosynthesis via de novo pathway; 5-formamido-1-(5-phospho-D-ribosyl)imidazole-4-carboxamide from 5-amino-1-(5-phospho-D-ribosyl)imidazole-4-carboxamide (10-formyl THF route): step 1/1. Its pathway is purine metabolism; IMP biosynthesis via de novo pathway; IMP from 5-formamido-1-(5-phospho-D-ribosyl)imidazole-4-carboxamide: step 1/1. The polypeptide is Bifunctional purine biosynthesis protein PurH (Cupriavidus pinatubonensis (strain JMP 134 / LMG 1197) (Cupriavidus necator (strain JMP 134))).